Consider the following 94-residue polypeptide: Integration host factor subunit beta (94 aa).

This sequence belongs to the bacterial histone-like protein family. In terms of assembly, heterodimer of an alpha and a beta chain.

In terms of biological role, this protein is one of the two subunits of integration host factor, a specific DNA-binding protein that functions in genetic recombination as well as in transcriptional and translational control. This chain is Integration host factor subunit beta, found in Pseudomonas paraeruginosa (strain DSM 24068 / PA7) (Pseudomonas aeruginosa (strain PA7)).